Consider the following 271-residue polypeptide: Extent of cell elongation protein 1 (271 aa).

The first 18 residues, 1 to 18 (MKFSKIACATVFALSSQA), serve as a signal peptide directing secretion. Residues 62 to 82 (SIIGIIMGILGNIPQVIQIIM) traverse the membrane as a helical segment.

Polymerizes in solution to form membrane pores. In terms of processing, cleavage by KEX2 generates 8 peptides ECE1-I to ECE1-VIII, all terminating in Lys-Arg. Only peptide ECE1-III, called candidalysin, shows toxin activity.

The protein localises to the secreted. The protein resides in the host cell membrane. Functionally, secreted protein cleaved by KEX2 in 8 similar peptides (ECE1-I to ECE1-VIII). Stimulates biofilm formation. Acts as a cytolytic peptide toxin that directly damages host epithelial membranes, triggers a danger response signaling pathway and activates epithelial immunity. Polymerizes in solution to form membrane pores to damage epithelial cells. Induces calcium influx, oxidative stress, mitochondrial dysfunction and ATP depletion in host cells, leading to epithelial necrosis. Serves as a danger signal that potentiates the immune response, and more specifically IL-17 response. Induces cytokine/chemokine secretion by host (especially CCL2/3/4, CXCL1 and S100A8), neutrophil recruitment, and promotes mortality in zebrafish and murine models of systemic fungal infection. Mediates distinct epithelial inflammatory responses through p38, EGFR-ERK and TREM-1/DAP12 pathways. Acts as one of the hypha-derived drivers of NLRP3 inflammasome responses in primary macrophages and thus contributes to the capacity to induce maturation and secretion of IL-1beta from primary macrophages. Stimulates mast cells by mediating cross-talk between signaling pathways activated by the dectin-1 receptor and MAPKs. Enables escape via the gasdermin-mediated pyroptosis, as well as a cell lysis pathway associated with macrophage extracellular trap formation termed ETosis. Acts as the main hemolytic factor of C.albicans. As an exotoxine, also promotes alcohol-associated liver disease or oral carcinogenesis. This chain is Extent of cell elongation protein 1, found in Candida albicans (strain SC5314 / ATCC MYA-2876) (Yeast).